Here is a 316-residue protein sequence, read N- to C-terminus: MIEFEKPNIHKIDESNNYGKFIVEPLERGYGTTLGNSLRRILLSSLPGAAVTSIQIDGVLHEFSTVEGVVEDVTQIILNVKKIALKLNGSDDQEETMEINVKGPAQITAGDIVAGADVDILNPDLYIATVADGATFHMRMTADKGRGYVSADENKTRNTDMPIGVLAVDSIYTPIERVNYQVENARVGQRADYDKLTLDVWTNGSINPSEAIALAAKILTEHLAMFVDLTDEAKNAEIMVEKEETHKEKMLEMTIEELDLSVRSYNCLKRAGINTVQELNNKTEADMMKVRNLGRKSLEEVKAKLADLGLSLRKED.

The tract at residues 1 to 230 (MIEFEKPNIH…EHLAMFVDLT (230 aa)) is alpha N-terminal domain (alpha-NTD). The interval 247–316 (KEKMLEMTIE…DLGLSLRKED (70 aa)) is alpha C-terminal domain (alpha-CTD).

The protein belongs to the RNA polymerase alpha chain family. As to quaternary structure, homodimer. The RNAP catalytic core consists of 2 alpha, 1 beta, 1 beta' and 1 omega subunit. When a sigma factor is associated with the core the holoenzyme is formed, which can initiate transcription.

The enzyme catalyses RNA(n) + a ribonucleoside 5'-triphosphate = RNA(n+1) + diphosphate. Its function is as follows. DNA-dependent RNA polymerase catalyzes the transcription of DNA into RNA using the four ribonucleoside triphosphates as substrates. The polypeptide is DNA-directed RNA polymerase subunit alpha (Levilactobacillus brevis (strain ATCC 367 / BCRC 12310 / CIP 105137 / JCM 1170 / LMG 11437 / NCIMB 947 / NCTC 947) (Lactobacillus brevis)).